The chain runs to 90 residues: Bombyxin G-1 (90 aa).

The signal sequence occupies residues 1–19 (MKLIIFVVFCITIYGSTSG). 3 disulfides stabilise this stretch: Cys28–Cys77, Cys40–Cys90, and Cys76–Cys81. A propeptide spans 49 to 67 (NTQYEGYHWPLLAYSEERI) (c peptide like).

It belongs to the insulin family. As to quaternary structure, heterodimer of a B chain and an A chain linked by two disulfide bonds.

It is found in the secreted. This Bombyx mori (Silk moth) protein is Bombyxin G-1 (BBXG1).